Reading from the N-terminus, the 493-residue chain is uncharacterized protein (493 aa).

Residues 96–124 (TTVAKASPPPAKPASAPTEITWKGSPQFT) are disordered.

This is an uncharacterized protein from Caulobacter vibrioides (strain ATCC 19089 / CIP 103742 / CB 15) (Caulobacter crescentus).